The chain runs to 506 residues: 7,8-dihydro-6-hydroxymethylpterin dimethyltransferase (506 aa).

Cys-73, Cys-77, Cys-80, Cys-98, Cys-102, and Cys-105 together coordinate [4Fe-4S] cluster. Positions 82–300 (NHKSTTILAN…FIKLVEEQTD (219 aa)) constitute a Radical SAM core domain.

This sequence belongs to the radical SAM superfamily. [4Fe-4S] cluster is required as a cofactor. S-adenosyl-L-methionine serves as cofactor.

It participates in cofactor biosynthesis; 5,6,7,8-tetrahydromethanopterin biosynthesis. Its function is as follows. Is responsible for the addition of methyl groups at C-7 and C-9 of the pterin ring during methanopterin (MPT) biosynthesis. Catalyzes methylation of 7,8-dihydro-6-hydroxymethylpterin, likely using methylenetetrahydromethanopterin as a methyl group donor, via a radical-based mechanism. This Methanocaldococcus jannaschii (strain ATCC 43067 / DSM 2661 / JAL-1 / JCM 10045 / NBRC 100440) (Methanococcus jannaschii) protein is 7,8-dihydro-6-hydroxymethylpterin dimethyltransferase.